The chain runs to 250 residues: tRNA pseudouridine synthase A (250 aa).

The Nucleophile role is filled by aspartate 52. Position 111 (tyrosine 111) interacts with substrate.

It belongs to the tRNA pseudouridine synthase TruA family. Homodimer.

The catalysed reaction is uridine(38/39/40) in tRNA = pseudouridine(38/39/40) in tRNA. In terms of biological role, formation of pseudouridine at positions 38, 39 and 40 in the anticodon stem and loop of transfer RNAs. This Methylorubrum extorquens (strain PA1) (Methylobacterium extorquens) protein is tRNA pseudouridine synthase A.